Here is a 454-residue protein sequence, read N- to C-terminus: Mitochondrial dynamics protein MID49 (454 aa).

Topologically, residues 1 to 22 are mitochondrial intermembrane; it reads MAEFSQKQRKQSGSEGLGSVVD. Residues 23–43 form a helical membrane-spanning segment; that stretch reads FLLANARLVLGVGGAAVLGIA. Residues 44–454 are Cytoplasmic-facing; sequence TLAVKRLIDR…SGLQVPESLF (411 aa). The disordered stretch occupies residues 76-113; sequence ATSPQKPQPPPAAFSQPLATGSPSPSVPVEPTPIHSPT.

The protein belongs to the MID49/MID51 family. Interacts with DNM1L.

Its subcellular location is the mitochondrion outer membrane. In terms of biological role, mitochondrial outer membrane protein which regulates mitochondrial organization. It is required for mitochondrial fission and promotes the recruitment and association of the fission mediator dynamin-related protein 1 (DNM1L) to the mitochondrial surface independently of the mitochondrial fission FIS1 and MFF proteins. Regulates DNM1L GTPase activity. This chain is Mitochondrial dynamics protein MID49 (Mief2), found in Mus musculus (Mouse).